The primary structure comprises 219 residues: Probable GTP-binding protein EngB (219 aa).

An EngB-type G domain is found at Val-24–Pro-207. GTP contacts are provided by residues Gly-32 to Ser-39, Gly-59 to His-63, Asp-81 to Gly-84, Thr-148 to Asp-151, and Leu-185 to Ala-188. The Mg(2+) site is built by Ser-39 and Thr-61.

This sequence belongs to the TRAFAC class TrmE-Era-EngA-EngB-Septin-like GTPase superfamily. EngB GTPase family. Mg(2+) serves as cofactor.

Its function is as follows. Necessary for normal cell division and for the maintenance of normal septation. This Burkholderia mallei (strain ATCC 23344) protein is Probable GTP-binding protein EngB.